Consider the following 533-residue polypeptide: Bifunctional aspartate aminotransferase and L-aspartate beta-decarboxylase (533 aa).

L-aspartate contacts are provided by Gly-115 and Asn-256. N6-(pyridoxal phosphate)lysine is present on Lys-315. Arg-497 serves as a coordination point for L-aspartate.

It belongs to the class-I pyridoxal-phosphate-dependent aminotransferase family. In terms of assembly, homododecamer. Pyridoxal 5'-phosphate is required as a cofactor.

It carries out the reaction L-aspartate + H(+) = L-alanine + CO2. The enzyme catalyses L-aspartate + 2-oxoglutarate = oxaloacetate + L-glutamate. In terms of biological role, bifunctional enzyme that has both L-aspartate decarboxylase and transaminase activity. The sequence is that of Bifunctional aspartate aminotransferase and L-aspartate beta-decarboxylase from Comamonas testosteroni (Pseudomonas testosteroni).